We begin with the raw amino-acid sequence, 128 residues long: MARSSKMMVAARLLALALAVSTAEARNIKTTTTEKKDDAVVQPQTFPPFDRLGGGASPAFGGLPGGSIPGSSIPGFSMPGSGSSLPGFSLPGSGTMPLFGGGSPGFSGFGGMPGSPTAGSVPEHANKP.

The N-terminal stretch at 1–25 (MARSSKMMVAARLLALALAVSTAEA) is a signal peptide. Residues 26–79 (RNIKTTTTEKKDDAVVQPQTFPPFDRLGGGASPAFGGLPGGSIPGSSIPGFSMP) form a disordered region. The segment covering 52–68 (LGGGASPAFGGLPGGSI) has biased composition (gly residues). A run of 11 repeats spans residues 64-67 (PGGS), 64-75 (PGGSIPGSSIPG), 69-72 (PGSS), 69-80 (PGSSIPGFSMPG), 74-77 (PGFS), 79-82 (PGSG), 81-92 (SGSSLPGFSLPG), 86-89 (PGFS), 91-94 (PGSG), 104-107 (PGFS), and 113-116 (PGSP). The tract at residues 64 to 92 (PGGSIPGSSIPGFSMPGSGSSLPGFSLPG) is 3 X approximate tandem repeats. The interval 64 to 116 (PGGSIPGSSIPGFSMPGSGSSLPGFSLPGSGTMPLFGGGSPGFSGFGGMPGSP) is 8 X 4 AA approximate repeats. Residues 69 to 79 (PGSSIPGFSMP) show a composition bias toward low complexity. Residues 99 to 113 (FGGGSPGFSGFGGMP) are compositionally biased toward gly residues. The interval 99-128 (FGGGSPGFSGFGGMPGSPTAGSVPEHANKP) is disordered.

Enhanced expression in male flowers. Accumulates in the glumes and in anther walls, paleas and lemmas of mature florets.

The polypeptide is MFS18 protein (MFS18) (Zea mays (Maize)).